Here is a 173-residue protein sequence, read N- to C-terminus: Protein MOTHER of FT and TFL1 (173 aa).

Ala-2 is subject to N-acetylalanine.

It belongs to the phosphatidylethanolamine-binding protein family. In terms of tissue distribution, expressed in gametophytes and developing seeds.

The protein resides in the cytoplasm. Its function is as follows. May form complexes with phosphorylated ligands by interfering with kinases and their effectors. Regulates seed germination via the abscisic acid (ABA) and gibberellic acid (GA)signaling pathways. During seed germination, MFT expression is directly repressed by ABI3 or promoted by ABI5 in the ABA signaling pathway. Involved in a negative feedback regulation of ABA signaling. Promotes embryo growth by direct repression of ABI5. In the GA signaling pathway, MFT expression is promoted by the DELLA protein RGL2 during seed germination. May regulate seed germination and fertility through the brassinosteroid (BR) signaling pathway. The chain is Protein MOTHER of FT and TFL1 (MFT) from Arabidopsis thaliana (Mouse-ear cress).